We begin with the raw amino-acid sequence, 165 residues long: Type 3 secretion system regulator YopR (165 aa).

The interval 2–11 is 5' secretion signal; the sequence is TVTLNRGSIT. A 3' secretion signal region spans residues 131–149; it reads PYLSELINKELMILLPYNS.

It belongs to the YopR family.

The protein resides in the secreted. May be involved in the regulation of the assembly of the type III secretion system (T3SS), also called injectisome, which is used to inject bacterial effector proteins into eukaryotic host cells. May control the secretion and/or polymerization of YscF/SctF, the principal component of the needle filament, thereby impacting the assembly of the T3SS. Involved in pathogenesis. Essential for the establishment of Yersinia infections in a mouse model system. This is Type 3 secretion system regulator YopR from Yersinia enterocolitica.